Here is a 363-residue protein sequence, read N- to C-terminus: Photosystem II protein D1 1 (363 aa).

3 helical membrane-spanning segments follow: residues 32-49 (YVGW…VSAI), 121-136 (HFLI…QWEL), and 145-159 (WIAM…AATA). Histidine 121 provides a ligand contact to chlorophyll a. Pheophytin a is bound at residue tyrosine 129. Glutamate 173 and glutamate 192 together coordinate [CaMn4O5] cluster. Residues 200-221 (FHMLGVVGVFGGAFLSAMHGSL) form a helical membrane-spanning segment. Histidine 201 lines the chlorophyll a pocket. Residues histidine 218 and 268–269 (AF) contribute to the a quinone site. A Fe cation-binding site is contributed by histidine 218. Histidine 276 is a Fe cation binding site. A helical membrane pass occupies residues 278–292 (LLAVLPTIGIWFAAL). [CaMn4O5] cluster-binding residues include histidine 336 and alanine 348. Residues 349–363 (STESKEIPTIPIMTS) constitute a propeptide that is removed on maturation.

This sequence belongs to the reaction center PufL/M/PsbA/D family. In terms of assembly, PSII is composed of 1 copy each of membrane proteins PsbA, PsbB, PsbC, PsbD, PsbE, PsbF, PsbH, PsbI, PsbJ, PsbK, PsbL, PsbM, PsbT, PsbX, PsbY, PsbZ, Psb30/Ycf12, peripheral proteins PsbO, CyanoQ (PsbQ), PsbU, PsbV and a large number of cofactors. It forms dimeric complexes. Requires The D1/D2 heterodimer binds P680, chlorophylls that are the primary electron donor of PSII, and subsequent electron acceptors. It shares a non-heme iron and each subunit binds pheophytin, quinone, additional chlorophylls, carotenoids and lipids. D1 provides most of the ligands for the Mn4-Ca-O5 cluster of the oxygen-evolving complex (OEC). There is also a Cl(-1) ion associated with D1 and D2, which is required for oxygen evolution. The PSII complex binds additional chlorophylls, carotenoids and specific lipids. as cofactor. Tyr-164 forms a radical intermediate that is referred to as redox-active TyrZ, YZ or Y-Z. Post-translationally, C-terminally processed by CtpA; processing is essential to allow assembly of the oxygen-evolving complex and thus photosynthetic growth.

It localises to the cellular thylakoid membrane. It catalyses the reaction 2 a plastoquinone + 4 hnu + 2 H2O = 2 a plastoquinol + O2. Its function is as follows. Photosystem II (PSII) is a light-driven water:plastoquinone oxidoreductase that uses light energy to abstract electrons from H(2)O, generating O(2) and a proton gradient subsequently used for ATP formation. It consists of a core antenna complex that captures photons, and an electron transfer chain that converts photonic excitation into a charge separation. The D1/D2 (PsbA/PsbD) reaction center heterodimer binds P680, the primary electron donor of PSII as well as several subsequent electron acceptors. This chain is Photosystem II protein D1 1, found in Acaryochloris marina (strain MBIC 11017).